Here is a 512-residue protein sequence, read N- to C-terminus: Probable ubiquitin carboxyl-terminal hydrolase 3 (512 aa).

The disordered stretch occupies residues 64–109; that stretch reads TSKTKESEKSPKSWSAIAKKHVQGDSPVKKSHSVPVPSDRSEKKSF. Positions 133–511 constitute a USP domain; that stretch reads RGFINTGNIC…VAYLLFYTRR (379 aa). Cys-142 functions as the Nucleophile in the catalytic mechanism. Residue His-453 is the Proton acceptor of the active site.

It belongs to the peptidase C19 family.

It catalyses the reaction Thiol-dependent hydrolysis of ester, thioester, amide, peptide and isopeptide bonds formed by the C-terminal Gly of ubiquitin (a 76-residue protein attached to proteins as an intracellular targeting signal).. In Schizosaccharomyces pombe (strain 972 / ATCC 24843) (Fission yeast), this protein is Probable ubiquitin carboxyl-terminal hydrolase 3 (ubp3).